The sequence spans 600 residues: Elongation factor 4 (600 aa).

One can recognise a tr-type G domain in the interval 5-187; it reads KYIRNFSIIA…AIVSKLPPPK (183 aa). GTP contacts are provided by residues 17-22 and 134-137; these read DHGKST and NKLD.

The protein belongs to the TRAFAC class translation factor GTPase superfamily. Classic translation factor GTPase family. LepA subfamily.

Its subcellular location is the cell inner membrane. It carries out the reaction GTP + H2O = GDP + phosphate + H(+). Required for accurate and efficient protein synthesis under certain stress conditions. May act as a fidelity factor of the translation reaction, by catalyzing a one-codon backward translocation of tRNAs on improperly translocated ribosomes. Back-translocation proceeds from a post-translocation (POST) complex to a pre-translocation (PRE) complex, thus giving elongation factor G a second chance to translocate the tRNAs correctly. Binds to ribosomes in a GTP-dependent manner. This chain is Elongation factor 4, found in Rickettsia rickettsii (strain Iowa).